Consider the following 254-residue polypeptide: 3-deoxy-manno-octulosonate cytidylyltransferase (254 aa).

Belongs to the KdsB family.

It is found in the cytoplasm. It carries out the reaction 3-deoxy-alpha-D-manno-oct-2-ulosonate + CTP = CMP-3-deoxy-beta-D-manno-octulosonate + diphosphate. It participates in nucleotide-sugar biosynthesis; CMP-3-deoxy-D-manno-octulosonate biosynthesis; CMP-3-deoxy-D-manno-octulosonate from 3-deoxy-D-manno-octulosonate and CTP: step 1/1. The protein operates within bacterial outer membrane biogenesis; lipopolysaccharide biosynthesis. Activates KDO (a required 8-carbon sugar) for incorporation into bacterial lipopolysaccharide in Gram-negative bacteria. This Chlamydia abortus (strain DSM 27085 / S26/3) (Chlamydophila abortus) protein is 3-deoxy-manno-octulosonate cytidylyltransferase.